We begin with the raw amino-acid sequence, 51 residues long: Large ribosomal subunit protein eL39 (51 aa).

A disordered region spans residues 32–51 (KGSVKQHPKMRHWRRNTLKK). Basic residues predominate over residues 33 to 51 (GSVKQHPKMRHWRRNTLKK).

The protein belongs to the eukaryotic ribosomal protein eL39 family.

This chain is Large ribosomal subunit protein eL39, found in Methanococcus vannielii (strain ATCC 35089 / DSM 1224 / JCM 13029 / OCM 148 / SB).